The primary structure comprises 664 residues: RBBP8 N-terminal-like protein (664 aa).

Residues 125–140 show a composition bias toward basic and acidic residues; it reads LRGLGDRPKPRAKEGT. Disordered stretches follow at residues 125-284 and 369-664; these read LRGL…KLSP and RAGS…WEET. Pro residues predominate over residues 241–255; the sequence is GTPPPLPARSSPPSP. Positions 437-454 are enriched in basic and acidic residues; it reads ALDKPLDLSEWGRARGQD. Over residues 481–496 the composition is skewed to polar residues; that stretch reads SGPLTRSPQALSNGTK. Positions 516-528 are enriched in low complexity; it reads LPGSQLSLSSPGS. Residues 537–552 show a composition bias toward pro residues; sequence PLPPPHPQPPPHPQPP. The span at 554–570 shows a compositional bias: basic and acidic residues; the sequence is LDGHPEPSKAEVLRPES. Residues 584–597 are compositionally biased toward polar residues; the sequence is GLSSQAEATTSTTG. The span at 628 to 637 shows a compositional bias: basic residues; sequence KKPSRGRRKL. Residues 654 to 664 show a composition bias toward polar residues; that stretch reads PSPNSSPWEET.

This is RBBP8 N-terminal-like protein (RBBP8NL) from Homo sapiens (Human).